The following is a 430-amino-acid chain: Histidine--tRNA ligase (430 aa).

This sequence belongs to the class-II aminoacyl-tRNA synthetase family. In terms of assembly, homodimer.

The protein localises to the cytoplasm. The catalysed reaction is tRNA(His) + L-histidine + ATP = L-histidyl-tRNA(His) + AMP + diphosphate + H(+). The protein is Histidine--tRNA ligase of Acinetobacter baumannii (strain ACICU).